Here is a 1238-residue protein sequence, read N- to C-terminus: MAEPDISSSETLTELQQLRLLYFFCFYHAAPFNVKTLVHSLIPPGALSYLLSTYDILRPWLMALRVREGPVNDISTIVQLYEEIVKTGFFINPPPFESYSQTLVARITTLGRPKLQVQQEAQSEVYQRASTNTQQQVSNVSHGNFKPNSSVNTEPNTSILSNSKYAGIKPFDFQSSSQNPGLVCEQKTFYQHQFRPFSNLPSNKSSPVKHVSPNVKNNSKKTASSVNSNHSSIPSSITKSNISSLDVYGSEKLISSGSQQPGHGMVQTTSDKVNASASLYDRSPSKKDITSSRNTSSYNLGSMRNPSTLKNAAHANPFEGLRFQGSSAVLKEGLNSTVKKTFFDNLNSEKVCPSVSPFLTPDNIASSILYSTASFSRSKPDRPRLNLSLELKLMQNELNKGQLKKQFKGDLRNLADWNNLSLVSSKFPSLPITNLRPDGSFLKHRRFNEEIAYNRQTLEKAIKQLDLSPDKVIQLREQNGVAVNGRVCYPTRNKHSEISAQSSSSLGVTKSLASEVYSSSTVDTISKLNTDKDNYLIKSKKEPIQQKSVSSETTLVKPSSTSSYIDTTNNVLKTNSSFKSSGLTSGPRNEKELLPEGIPTSHNNSETQAQTADVSNIAASADGIYNSDQEKPPEKLDVTKRAFGREIENSNEKELLTSTFLSPSAESQVCLAEIKTIRPGLVPKKQFSVDQNNVISDNTDCSLPKPSNSKLSSISSDGDASSNRMAVPDKSPFVHAAPNSKALTKDSFSTHISVSSLLHSDNEISPIDSTRKDYFTSKDSNLQTLKEDASSTKQAKDSGTNDFDKLISGNDVSKNNSGEEQSRSALKPLISGKLSSCESINLTKDISTVKRKEYFGIESTSSKQPFHDTGSIKIPAKRSFDTIDKDFRSSNIPFADKIKEDGGDKNVISSIHITTELPKSMPVEVPTNAGAQSDQSNVVDSESLNLRENISTSVADVSLSQAGNEAVLSKKACKPLVLIDPFEEKVLKAFNMLSKGYAEYRCQWEGCLANLHSLENFIKHVLLLHHPKSCSVVKCLWASCDMVLPSEEFEMHLRGHLNNIRLNCEVSNCKKCFSNYEDMFKHLQHSHLPFKFTPESFIKIRNGNVKEEARRTRNAYTQKSGEVECFMETCTPIAKPAPANWYPVPPPGFNSSLLSRLTQSNQSKDKIIAALAKRNVYKSFAGLYDSKGKNDNTGYDFDSNYARVGRHGSFILPVSKSVPTPSLLIEGSIVQRKNIKIE.

Disordered stretches follow at residues 133-156 (TQQQ…TEPN), 196-237 (PFSN…PSSI), 277-303 (ASLY…LGSM), 546-568 (QKSV…IDTT), 696-735 (SDNT…PFVH), and 784-824 (TLKE…QSRS). A compositionally biased stretch (polar residues) spans 214 to 223 (NVKNNSKKTA). Positions 224–237 (SSVNSNHSSIPSSI) are enriched in low complexity. Positions 291–303 (SSRNTSSYNLGSM) are enriched in polar residues. Over residues 702 to 723 (SLPKPSNSKLSSISSDGDASSN) the composition is skewed to low complexity. Positions 785-796 (LKEDASSTKQAK) are enriched in basic and acidic residues. Over residues 810–819 (NDVSKNNSGE) the composition is skewed to polar residues. A C2H2-type zinc finger spans residues 1062–1087 (LNCEVSNCKKCFSNYEDMFKHLQHSH).

Interacts with clr3.

Its subcellular location is the nucleus. It is found in the chromosome. It localises to the centromere. The protein localises to the telomere. Functionally, regulates silencing of the mat2 and mat3 loci. Organizes the chromatin structure of the mating-type region where it also participates in establishing the 'cold spot' for recombination. Required for proper positioning of nucleosomes at heterochromatic loci and for transcriptional gene silencing (TGS) function of the Snf2/Hdac-containing repressor complex (SHREC). This is Cryptic loci regulator protein 1 (clr1) from Schizosaccharomyces pombe (strain 972 / ATCC 24843) (Fission yeast).